The following is a 289-amino-acid chain: ATP synthase gamma chain (289 aa).

This sequence belongs to the ATPase gamma chain family. As to quaternary structure, F-type ATPases have 2 components, CF(1) - the catalytic core - and CF(0) - the membrane proton channel. CF(1) has five subunits: alpha(3), beta(3), gamma(1), delta(1), epsilon(1). CF(0) has three main subunits: a, b and c.

It is found in the cell membrane. Functionally, produces ATP from ADP in the presence of a proton gradient across the membrane. The gamma chain is believed to be important in regulating ATPase activity and the flow of protons through the CF(0) complex. The sequence is that of ATP synthase gamma chain from Mycoplasmopsis synoviae (strain 53) (Mycoplasma synoviae).